The primary structure comprises 353 residues: MTIALGKFTKDQNDLFDIMDDWLRRDRFVFVGWSGLLLFPCAYFAVGGWFTGTTFVTSWYTHGLASSYLEGCNFLTAAVSTPANSLAHSLLLLWGPEAQGDFTRWCQLGGLWTFVALHGAFGLIGFMLRQFELARSVQLRPYNAIAFSGPIAVFVSVFLIYPLGQSGWFFAPSFGVAAIFRFILFFQGFHNWTLNPFHMMGVAGVLGAALLCAIHGATVENTLFEDGDGANTFRAFNPTQAEETYSMVTANRFWSQIFGVAFSNKRWLHFFMLFVPVTGLWMSALGVVGLALNLRAYDFVSQEIRAAEDPEFETFYTKNILLNEGIRAWMAAQDQPHENLIFPEEVLPRGNAL.

An N-acetylthreonine modification is found at Thr2. Thr2 bears the Phosphothreonine mark. The helical transmembrane segment at 41–61 (CAYFAVGGWFTGTTFVTSWYT) threads the bilayer. His118 provides a ligand contact to chlorophyll a. The chain crosses the membrane as a helical span at residues 125-141 (GFMLRQFELARSVQLRP). Residues Gln130 and Asn143 each coordinate pheophytin a. A helical transmembrane segment spans residues 153-166 (VFVSVFLIYPLGQS). Residue His198 participates in chlorophyll a binding. The helical transmembrane segment at 208–228 (AALLCAIHGATVENTLFEDGD) threads the bilayer. A plastoquinone-binding residues include His215 and Phe262. His215 provides a ligand contact to Fe cation. Fe cation is bound at residue His269. Residues 279–295 (GLWMSALGVVGLALNLR) traverse the membrane as a helical segment.

It belongs to the reaction center PufL/M/PsbA/D family. In terms of assembly, PSII is composed of 1 copy each of membrane proteins PsbA, PsbB, PsbC, PsbD, PsbE, PsbF, PsbH, PsbI, PsbJ, PsbK, PsbL, PsbM, PsbT, PsbX, PsbY, PsbZ, Psb30/Ycf12, at least 3 peripheral proteins of the oxygen-evolving complex and a large number of cofactors. It forms dimeric complexes. The D1/D2 heterodimer binds P680, chlorophylls that are the primary electron donor of PSII, and subsequent electron acceptors. It shares a non-heme iron and each subunit binds pheophytin, quinone, additional chlorophylls, carotenoids and lipids. There is also a Cl(-1) ion associated with D1 and D2, which is required for oxygen evolution. The PSII complex binds additional chlorophylls, carotenoids and specific lipids. serves as cofactor.

The protein localises to the plastid. It is found in the chloroplast thylakoid membrane. The enzyme catalyses 2 a plastoquinone + 4 hnu + 2 H2O = 2 a plastoquinol + O2. In terms of biological role, photosystem II (PSII) is a light-driven water:plastoquinone oxidoreductase that uses light energy to abstract electrons from H(2)O, generating O(2) and a proton gradient subsequently used for ATP formation. It consists of a core antenna complex that captures photons, and an electron transfer chain that converts photonic excitation into a charge separation. The D1/D2 (PsbA/PsbD) reaction center heterodimer binds P680, the primary electron donor of PSII as well as several subsequent electron acceptors. D2 is needed for assembly of a stable PSII complex. This chain is Photosystem II D2 protein, found in Cicer arietinum (Chickpea).